Consider the following 799-residue polypeptide: Elongation factor G, mitochondrial (799 aa).

A mitochondrion-targeting transit peptide spans 1 to 33 (MRSPSLARLQTRAVFGLTRSARFQPQTLLRQRC). The tr-type G domain maps to 97–384 (DKCRNIGIAA…GVIDYLPNPA (288 aa)). Residues 106–113 (AHIDSGKT), 182–186 (DTPGH), and 236–239 (NKMD) contribute to the GTP site.

This sequence belongs to the TRAFAC class translation factor GTPase superfamily. Classic translation factor GTPase family. EF-G/EF-2 subfamily.

Its subcellular location is the mitochondrion. It participates in protein biosynthesis; polypeptide chain elongation. Functionally, mitochondrial GTPase that catalyzes the GTP-dependent ribosomal translocation step during translation elongation. During this step, the ribosome changes from the pre-translocational (PRE) to the post-translocational (POST) state as the newly formed A-site-bound peptidyl-tRNA and P-site-bound deacylated tRNA move to the P and E sites, respectively. Catalyzes the coordinated movement of the two tRNA molecules, the mRNA and conformational changes in the ribosome. The protein is Elongation factor G, mitochondrial (mef1) of Penicillium rubens (strain ATCC 28089 / DSM 1075 / NRRL 1951 / Wisconsin 54-1255) (Penicillium chrysogenum).